A 343-amino-acid polypeptide reads, in one-letter code: Sulfate/thiosulfate import ATP-binding protein CysA (343 aa).

Residues 3-237 (IRISHLRKQF…PASPFVYSFV (235 aa)) enclose the ABC transporter domain. Position 35–42 (35–42 (GPSGSGKT)) interacts with ATP.

This sequence belongs to the ABC transporter superfamily. Sulfate/tungstate importer (TC 3.A.1.6) family. In terms of assembly, the complex is composed of two ATP-binding proteins (CysA), two transmembrane proteins (CysT and CysW) and a solute-binding protein (CysP).

Its subcellular location is the cell inner membrane. The catalysed reaction is sulfate(out) + ATP + H2O = sulfate(in) + ADP + phosphate + H(+). It catalyses the reaction thiosulfate(out) + ATP + H2O = thiosulfate(in) + ADP + phosphate + H(+). In terms of biological role, part of the ABC transporter complex CysAWTP involved in sulfate/thiosulfate import. Responsible for energy coupling to the transport system. The sequence is that of Sulfate/thiosulfate import ATP-binding protein CysA from Xanthomonas campestris pv. campestris (strain ATCC 33913 / DSM 3586 / NCPPB 528 / LMG 568 / P 25).